Consider the following 448-residue polypeptide: Glutamate--tRNA ligase 1 (448 aa).

The 'HIGH' region motif lies at 10 to 20 (PSPTGMLHVGN). Residues 240-244 (KISKR) carry the 'KMSKS' region motif. Lysine 243 is a binding site for ATP.

The protein belongs to the class-I aminoacyl-tRNA synthetase family. Glutamate--tRNA ligase type 1 subfamily. Monomer.

Its subcellular location is the cytoplasm. The catalysed reaction is tRNA(Glu) + L-glutamate + ATP = L-glutamyl-tRNA(Glu) + AMP + diphosphate. Its function is as follows. Catalyzes the attachment of glutamate to tRNA(Glu) in a two-step reaction: glutamate is first activated by ATP to form Glu-AMP and then transferred to the acceptor end of tRNA(Glu). This chain is Glutamate--tRNA ligase 1, found in Rickettsia typhi (strain ATCC VR-144 / Wilmington).